A 192-amino-acid chain; its full sequence is Ion-translocating oxidoreductase complex subunit B (192 aa).

The segment at 1-26 is hydrophobic; that stretch reads MNTIWIAVGALTFLGLVFGAILGYAS. In terms of domain architecture, 4Fe-4S spans 32 to 91; sequence EDDPVVEKIDAILPQSQCGQCGYPGCRPYAEAVGLQGEKINRCAPGGEAVMLKIADLLNV. Residues Cys-49, Cys-52, Cys-57, Cys-74, Cys-117, Cys-120, Cys-123, Cys-127, Cys-147, Cys-150, Cys-153, and Cys-157 each contribute to the [4Fe-4S] cluster site. 2 4Fe-4S ferredoxin-type domains span residues 108–137 and 138–167; these read MLAVIDENHCIGCTKCIQACPVDAIVGATR and AMHTVMSDLCTGCNLCVDPCPTHCIELRPV.

The protein belongs to the 4Fe4S bacterial-type ferredoxin family. RnfB subfamily. The complex is composed of six subunits: RsxA, RsxB, RsxC, RsxD, RsxE and RsxG. [4Fe-4S] cluster serves as cofactor.

The protein resides in the cell inner membrane. Its function is as follows. Part of a membrane-bound complex that couples electron transfer with translocation of ions across the membrane. Required to maintain the reduced state of SoxR. The protein is Ion-translocating oxidoreductase complex subunit B of Salmonella arizonae (strain ATCC BAA-731 / CDC346-86 / RSK2980).